The primary structure comprises 719 residues: Calpain-12 (719 aa).

In terms of domain architecture, Calpain catalytic spans 45 to 341 (LFRDPYFPAG…FDTVQICSLS (297 aa)). Residues cysteine 105, histidine 259, and asparagine 283 contribute to the active site. The domain III stretch occupies residues 342–540 (PEVLGPSPEG…DDVISADLQS (199 aa)). Residues 393-402 (DEEDDEDEEG) are compositionally biased toward acidic residues. A disordered region spans residues 393–418 (DEEDDEDEEGPWGGWGAAGARGPARG). Positions 541-719 (LQGPYLPLEL…RQWMEVATFS (179 aa)) are domain IV. Positions 620–655 (GYLLEWQAIFNKFDEDTSGTMNSYELRLALNAAGFH) constitute an EF-hand domain. Positions 633, 635, 637, 639, and 644 each coordinate Ca(2+).

It belongs to the peptidase C2 family.

Calcium-regulated non-lysosomal thiol-protease. This is Calpain-12 (CAPN12) from Homo sapiens (Human).